A 211-amino-acid chain; its full sequence is Adenylate kinase (211 aa).

10–15 (GSGKGT) contacts ATP. The segment at 30-59 (STGDLFRENILNSTTLGKEIKKIVEKGELV) is NMP. Residues threonine 31, arginine 36, 57 to 59 (ELV), 85 to 88 (GFPR), and glutamine 92 contribute to the AMP site. Residues 121–158 (GRRICKSCNNIFNIYTLATKKNGICDVCKGDLYQREDD) form an LID region. An ATP-binding site is contributed by arginine 122. 2 residues coordinate Zn(2+): cysteine 125 and cysteine 128. 131–132 (IF) is a binding site for ATP. Zn(2+) is bound by residues cysteine 145 and cysteine 148. 2 residues coordinate AMP: arginine 155 and arginine 166. Residue valine 194 coordinates ATP.

Belongs to the adenylate kinase family. As to quaternary structure, monomer.

It localises to the cytoplasm. The catalysed reaction is AMP + ATP = 2 ADP. It functions in the pathway purine metabolism; AMP biosynthesis via salvage pathway; AMP from ADP: step 1/1. Catalyzes the reversible transfer of the terminal phosphate group between ATP and AMP. Plays an important role in cellular energy homeostasis and in adenine nucleotide metabolism. The sequence is that of Adenylate kinase from Borrelia garinii subsp. bavariensis (strain ATCC BAA-2496 / DSM 23469 / PBi) (Borreliella bavariensis).